Consider the following 728-residue polypeptide: 1,4-alpha-glucan branching enzyme GlgB (728 aa).

D405 (nucleophile) is an active-site residue. The active-site Proton donor is the E458.

Belongs to the glycosyl hydrolase 13 family. GlgB subfamily. Monomer.

It carries out the reaction Transfers a segment of a (1-&gt;4)-alpha-D-glucan chain to a primary hydroxy group in a similar glucan chain.. It functions in the pathway glycan biosynthesis; glycogen biosynthesis. Catalyzes the formation of the alpha-1,6-glucosidic linkages in glycogen by scission of a 1,4-alpha-linked oligosaccharide from growing alpha-1,4-glucan chains and the subsequent attachment of the oligosaccharide to the alpha-1,6 position. The protein is 1,4-alpha-glucan branching enzyme GlgB of Salmonella paratyphi A (strain ATCC 9150 / SARB42).